The sequence spans 172 residues: Photosystem I assembly protein Ycf3 (172 aa).

TPR repeat units lie at residues 35-68, 72-105, and 120-153; these read AFSY…EEDP, SYIL…NSQL, and GVKA…SPNN.

Belongs to the Ycf3 family.

It is found in the plastid. It localises to the chloroplast thylakoid membrane. Functionally, essential for the assembly of the photosystem I (PSI) complex. May act as a chaperone-like factor to guide the assembly of the PSI subunits. The protein is Photosystem I assembly protein Ycf3 of Guillardia theta (Cryptophyte).